We begin with the raw amino-acid sequence, 172 residues long: Large ribosomal subunit protein uL10 (172 aa).

It belongs to the universal ribosomal protein uL10 family. In terms of assembly, part of the ribosomal stalk of the 50S ribosomal subunit. The N-terminus interacts with L11 and the large rRNA to form the base of the stalk. The C-terminus forms an elongated spine to which L12 dimers bind in a sequential fashion forming a multimeric L10(L12)X complex.

Its function is as follows. Forms part of the ribosomal stalk, playing a central role in the interaction of the ribosome with GTP-bound translation factors. The polypeptide is Large ribosomal subunit protein uL10 (Afipia carboxidovorans (strain ATCC 49405 / DSM 1227 / KCTC 32145 / OM5) (Oligotropha carboxidovorans)).